The sequence spans 984 residues: Probable translation initiation factor IF-2 (984 aa).

The 122-residue stretch at 94-215 (VNGWYSVTVT…LPLLLLRFGI (122 aa)) folds into the DOD-type homing endonuclease domain. The tr-type G domain maps to 391-608 (TTETHNFVAN…LIAGLSQKYL (218 aa)). Residues 464–468 (DTPGH) and 518–521 (NKID) each bind GTP.

Belongs to the TRAFAC class translation factor GTPase superfamily. Classic translation factor GTPase family. IF-2 subfamily. Post-translationally, this protein undergoes a protein self splicing that involves a post-translational excision of the intervening region (intein) followed by peptide ligation.

Functionally, function in general translation initiation by promoting the binding of the formylmethionine-tRNA to ribosomes. Seems to function along with eIF-2. In Pyrococcus furiosus (strain ATCC 43587 / DSM 3638 / JCM 8422 / Vc1), this protein is Probable translation initiation factor IF-2 (infB).